We begin with the raw amino-acid sequence, 374 residues long: Beta sliding clamp (374 aa).

Belongs to the beta sliding clamp family. As to quaternary structure, forms a ring-shaped head-to-tail homodimer around DNA which binds and tethers DNA polymerases and other proteins to the DNA. The DNA replisome complex has a single clamp-loading complex (3 tau and 1 each of delta, delta', psi and chi subunits) which binds 3 Pol III cores (1 core on the leading strand and 2 on the lagging strand) each with a beta sliding clamp dimer. Additional proteins in the replisome are other copies of gamma, psi and chi, Ssb, DNA helicase and RNA primase.

The protein resides in the cytoplasm. Its function is as follows. Confers DNA tethering and processivity to DNA polymerases and other proteins. Acts as a clamp, forming a ring around DNA (a reaction catalyzed by the clamp-loading complex) which diffuses in an ATP-independent manner freely and bidirectionally along dsDNA. Initially characterized for its ability to contact the catalytic subunit of DNA polymerase III (Pol III), a complex, multichain enzyme responsible for most of the replicative synthesis in bacteria; Pol III exhibits 3'-5' exonuclease proofreading activity. The beta chain is required for initiation of replication as well as for processivity of DNA replication. This Helicobacter pylori (strain ATCC 700392 / 26695) (Campylobacter pylori) protein is Beta sliding clamp (dnaN).